The sequence spans 317 residues: Melanocyte-stimulating hormone receptor (317 aa).

At 1–37 (MPVQGSQRRLLGSLNSTPTATPHLGLAANQTGARCLE) the chain is on the extracellular side. N-linked (GlcNAc...) asparagine glycosylation occurs at Asn-29. The helical transmembrane segment at 38 to 63 (VSVPDGLFLSLGLVSLVENVLVVTAI) threads the bilayer. Over 64 to 72 (AKNRNLHSP) the chain is Cytoplasmic. The chain crosses the membrane as a helical span at residues 73–93 (MYCFICCLALSDLLVSGSNML). Topologically, residues 94-118 (ETAVTLLLEAGVLAARAAVVQQLDN) are extracellular. A helical membrane pass occupies residues 119-140 (VIDVITCSSMLSSLCFLGAIAV). At 141–163 (DRYISIFYALRYHSIVTLPRARR) the chain is on the cytoplasmic side. The chain crosses the membrane as a helical span at residues 164–183 (AVAAIWVASVLFSTLFIAYY). The Extracellular portion of the chain corresponds to 184 to 191 (DHAAVLLC). Residues 192 to 211 (LVIFFLAMLVLMAVLYVHML) form a helical membrane-spanning segment. Residues 212–240 (ARACQHAQGIARLHKRQRLAHQGFGLKGA) lie on the Cytoplasmic side of the membrane. Residues 241–266 (ATLTILLGIFFLCWGPFFLHLTLIVL) form a helical membrane-spanning segment. Residues 267–279 (CPQHPTCSCIFKN) lie on the Extracellular side of the membrane. A helical membrane pass occupies residues 280-300 (FNLFLALIICNAIIDPLIYAF). At 301–317 (RSQELRRTLKEVLLCSW) the chain is on the cytoplasmic side. A lipid anchor (S-palmitoyl cysteine) is attached at Cys-315.

Belongs to the G-protein coupled receptor 1 family. As to quaternary structure, interacts with MGRN1, but does not undergo MGRN1-mediated ubiquitination; this interaction competes with GNAS-binding and thus inhibits agonist-induced cAMP production. Interacts with OPN3; the interaction results in a decrease in MC1R-mediated cAMP signaling and ultimately a decrease in melanin production in melanocytes.

The protein localises to the cell membrane. Functionally, receptor for MSH (alpha, beta and gamma) and ACTH. The activity of this receptor is mediated by G proteins which activate adenylate cyclase. Mediates melanogenesis, the production of eumelanin (black/brown) and phaeomelanin (red/yellow), via regulation of cAMP signaling in melanocytes. The chain is Melanocyte-stimulating hormone receptor (MC1R) from Papio anubis (Olive baboon).